We begin with the raw amino-acid sequence, 432 residues long: Type I restriction enzyme MjaIX specificity subunit (432 aa).

This sequence belongs to the type-I restriction system S methylase family. As to quaternary structure, the type I restriction/modification system is composed of three polypeptides R, M and S.

Functionally, the specificity (S) subunit of a type I restriction enzyme; this subunit dictates DNA sequence specificity. The M and S subunits together form a methyltransferase (MTase) that methylates A-3 on the top and A-2 on the bottom strand of the sequence 5'-CCAN(5)GTR-3'. In the presence of the R subunit the complex can also act as an endonuclease, binding to the same target sequence but cutting the DNA some distance from this site. Whether the DNA is cut or modified depends on the methylation state of the target sequence. When the target site is unmodified, the DNA is cut. When the target site is hemimethylated, the complex acts as a maintenance MTase modifying the DNA so that both strands become methylated. After locating a non-methylated recognition site, the enzyme complex serves as a molecular motor that translocates DNA in an ATP-dependent manner until a collision occurs that triggers cleavage. In Methanocaldococcus jannaschii (strain ATCC 43067 / DSM 2661 / JAL-1 / JCM 10045 / NBRC 100440) (Methanococcus jannaschii), this protein is Type I restriction enzyme MjaIX specificity subunit (hsdS).